Reading from the N-terminus, the 854-residue chain is MSQKELAALVATRTSRKRTISSTSFSISTRTDPKSIIEIHIFNDSLPIKRACCEVENPTLKAEQRVQQEEESLGQVPPLTEEEQQRHDEFRNSGSIFLQDLPCFKLQQAQPIAGSSPIPKCRECRRRNLATTEGEPSSVSDVYCRFYEFRRLQFNENGELCVVGFPNPYSEPSPEDIAIWQPDKNTPPTSGYMDIQVCRYILLHAGDQFCYIWHQEAEALSLHQNTDGTIAWKKAVKGTREICDVCDTTLFNYHWTCRKCGFGVCLDCVKDRKEGLRLRRAENAAQKGCDEYHWLLCSDPSGPQEHVLTELMLTQIIAGDALNVLGRLLHEVRTLWQVPQVCGCLLSKQAIEDAQSKEVIQDMIKESQLKQHTSYSSLASEQKVHQQQRLDQLHATKLEFARELGVDYVPGRVWTKETLGKDPITTAFDNLKHINFLRKGLAGLRRFLPPRTMTFAYSTQLAPGVPHEFLCDGRLLRLTDAMHPDNRVLFQEVWKCGQPVMISEVARSLNLDLWHPQAFCRDFGDKPNDLINCLNGNLVPNQPMRHFWEGFQCMTKRLPDAYGKPMLLKLKDWPPGDDFAEILPTRFADLMKGLPMPEYTLRTGNLNIASCLPKMFVPPDLGPKMYNAYGSALHPDKGTTNLHLDISDAVNIMVYVGIPQDGDTRPQMAATQKAIEIGGCDYITRARCQSPDVLPGALWHIFPARDADKIRDLLNRVTLEKGFRLEPDHDPIHDQNWYLDDKLRARLFKEYGVEGHPIVQCLGDAVFIPAGAPHQVQNLHNCIKVAEDFVSPENITHCYHLTHEFRRLSHSHTNHEDKLQIKNIIYHAIKDCCTILTRAVDERLNAELTKLNAD.

Residues 64 to 88 (QRVQQEEESLGQVPPLTEEEQQRHD) are disordered. One can recognise a JmjC domain in the interval 601-806 (LRTGNLNIAS…HCYHLTHEFR (206 aa)). Fe cation-binding residues include His643, Asp645, and His774.

This sequence belongs to the JHDM2-like histone demethylase family. Fe(2+) serves as cofactor. Expressed in neurons close to the dorsal lateral neurons involved in circadian rhythm.

The protein localises to the nucleus. It is found in the cytoplasm. The enzyme catalyses N(6),N(6)-dimethyl-L-lysyl(9)-[histone H3] + 2 2-oxoglutarate + 2 O2 = L-lysyl(9)-[histone H3] + 2 formaldehyde + 2 succinate + 2 CO2. In terms of biological role, histone demethylase that specifically demethylates 'Lys-10' of histone H3 (H3K9), thereby playing a central role in histone code. Demethylation of Lys residue generates formaldehyde and succinate. Probably involved in regulation of chromatin structure, promoting expansion of euchromatin. Negatively regulates rhino-dependent piRNA production capacity of several genomic regions; may help define the frontiers of piRNA clusters by regulating histone methylation levels. May be involved in regulation of behavior and circadian rhythms. This Drosophila melanogaster (Fruit fly) protein is Lysine-specific demethylase 3.